Reading from the N-terminus, the 245-residue chain is Carboxy-S-adenosyl-L-methionine synthase (245 aa).

S-adenosyl-L-methionine contacts are provided by residues Tyr-42, 67-69 (GCS), 92-93 (DN), 120-121 (DI), Asn-135, and Arg-202.

Belongs to the class I-like SAM-binding methyltransferase superfamily. Cx-SAM synthase family. Homodimer.

It catalyses the reaction prephenate + S-adenosyl-L-methionine = carboxy-S-adenosyl-L-methionine + 3-phenylpyruvate + H2O. Its function is as follows. Catalyzes the conversion of S-adenosyl-L-methionine (SAM) to carboxy-S-adenosyl-L-methionine (Cx-SAM). In Vibrio vulnificus (strain CMCP6), this protein is Carboxy-S-adenosyl-L-methionine synthase.